The sequence spans 199 residues: Recombination protein RecR (199 aa).

Residues 58-73 (CRICYNITDTEVCNIC) form a C4-type zinc finger. The Toprim domain maps to 81–176 (SLICVVSHPM…KVTRIAHGVP (96 aa)).

It belongs to the RecR family.

Its function is as follows. May play a role in DNA repair. It seems to be involved in an RecBC-independent recombinational process of DNA repair. It may act with RecF and RecO. This Thermoanaerobacter pseudethanolicus (strain ATCC 33223 / 39E) (Clostridium thermohydrosulfuricum) protein is Recombination protein RecR.